A 522-amino-acid polypeptide reads, in one-letter code: 2-isopropylmalate synthase (522 aa).

The Pyruvate carboxyltransferase domain occupies 5–267; the sequence is VIIFDTTLRD…ETGINAKEIH (263 aa). The Mn(2+) site is built by D14, H202, H204, and N238. The interval 392-522 is regulatory domain; the sequence is QLRQLVVQSD…MHKNRELGGV (131 aa).

It belongs to the alpha-IPM synthase/homocitrate synthase family. LeuA type 1 subfamily. In terms of assembly, homodimer. Requires Mn(2+) as cofactor.

It localises to the cytoplasm. The enzyme catalyses 3-methyl-2-oxobutanoate + acetyl-CoA + H2O = (2S)-2-isopropylmalate + CoA + H(+). It functions in the pathway amino-acid biosynthesis; L-leucine biosynthesis; L-leucine from 3-methyl-2-oxobutanoate: step 1/4. Functionally, catalyzes the condensation of the acetyl group of acetyl-CoA with 3-methyl-2-oxobutanoate (2-ketoisovalerate) to form 3-carboxy-3-hydroxy-4-methylpentanoate (2-isopropylmalate). This is 2-isopropylmalate synthase from Shewanella oneidensis (strain ATCC 700550 / JCM 31522 / CIP 106686 / LMG 19005 / NCIMB 14063 / MR-1).